Here is a 176-residue protein sequence, read N- to C-terminus: Peptidoglycan-associated lipoprotein (176 aa).

The N-terminal stretch at 1 to 21 (MKAGSFYKLGLLVASAVLVAA) is a signal peptide. Residue C22 is the site of N-palmitoyl cysteine attachment. Residue C22 is the site of S-diacylglycerol cysteine attachment. The OmpA-like domain maps to 60 to 176 (YTTQAPHNQL…RVEFIYEATR (117 aa)).

The protein belongs to the Pal lipoprotein family. As to quaternary structure, the Tol-Pal system is composed of five core proteins: the inner membrane proteins TolA, TolQ and TolR, the periplasmic protein TolB and the outer membrane protein Pal. They form a network linking the inner and outer membranes and the peptidoglycan layer.

The protein localises to the cell outer membrane. Its function is as follows. Part of the Tol-Pal system, which plays a role in outer membrane invagination during cell division and is important for maintaining outer membrane integrity. Very strongly associated with the peptidoglycan. This Legionella pneumophila protein is Peptidoglycan-associated lipoprotein.